We begin with the raw amino-acid sequence, 414 residues long: Mu-like prophage FluMu F protein (414 aa).

This sequence to phage Mu protein F.

Its function is as follows. Involved in virion morphogenesis. This chain is Mu-like prophage FluMu F protein, found in Haemophilus influenzae (strain ATCC 51907 / DSM 11121 / KW20 / Rd).